The following is a 142-amino-acid chain: Large ribosomal subunit protein uL13 (142 aa).

It belongs to the universal ribosomal protein uL13 family. Part of the 50S ribosomal subunit.

In terms of biological role, this protein is one of the early assembly proteins of the 50S ribosomal subunit, although it is not seen to bind rRNA by itself. It is important during the early stages of 50S assembly. The sequence is that of Large ribosomal subunit protein uL13 from Methanosphaera stadtmanae (strain ATCC 43021 / DSM 3091 / JCM 11832 / MCB-3).